We begin with the raw amino-acid sequence, 211 residues long: MFVLASASKARQKLLDQIALRHKVIVSDFDETQLQEPDPILKVKLLAKAKADSALKKLIEENHALNTYQALLGCDSLFEFKGEIFEKPIDKEQLISRWQRMSGQSGFLHTGHCLISLDNSKSDRESISQNNSCDGVVSTRIEFMNLSNFEINKYASTSEPYNCAGGFAIEGNGGLFIKKIDGCFSNVIGLSLPWLKNNLEKFGLSRLLLDR.

The active-site Proton acceptor is Asp-75.

It belongs to the Maf family. A divalent metal cation is required as a cofactor.

The protein resides in the cytoplasm. The enzyme catalyses a ribonucleoside 5'-triphosphate + H2O = a ribonucleoside 5'-phosphate + diphosphate + H(+). It carries out the reaction a 2'-deoxyribonucleoside 5'-triphosphate + H2O = a 2'-deoxyribonucleoside 5'-phosphate + diphosphate + H(+). Nucleoside triphosphate pyrophosphatase. May have a dual role in cell division arrest and in preventing the incorporation of modified nucleotides into cellular nucleic acids. The protein is Nucleoside triphosphate pyrophosphatase of Prochlorococcus marinus (strain NATL2A).